We begin with the raw amino-acid sequence, 245 residues long: Putative protein phosphatase 2C-like protein 45 (245 aa).

Residues 1–188 (MEDRFSTITN…DDISVMLIPL (188 aa)) form the PPM-type phosphatase domain.

This sequence belongs to the PP2C family.

This is Putative protein phosphatase 2C-like protein 45 from Arabidopsis thaliana (Mouse-ear cress).